The following is a 156-amino-acid chain: Transcriptional repressor NrdR (156 aa).

A zinc finger spans residues 3 to 34 (CPYCGHLDNKVIDSRINKDATITRRRRSCLAC). One can recognise an ATP-cone domain in the interval 49–139 (PMLVKKDGRR…VYRQFKDVDE (91 aa)).

This sequence belongs to the NrdR family. It depends on Zn(2+) as a cofactor.

Negatively regulates transcription of bacterial ribonucleotide reductase nrd genes and operons by binding to NrdR-boxes. The chain is Transcriptional repressor NrdR from Desulfotalea psychrophila (strain LSv54 / DSM 12343).